The sequence spans 497 residues: Glutamyl-tRNA(Gln) amidotransferase subunit A (497 aa).

Catalysis depends on charge relay system residues Lys-91 and Ser-166. The interval 143–171 (SSTENSAYGPTHNPWDLERTAGGSGGGSS) is disordered. The Acyl-ester intermediate role is filled by Ser-190.

This sequence belongs to the amidase family. GatA subfamily. As to quaternary structure, heterotrimer of A, B and C subunits.

The catalysed reaction is L-glutamyl-tRNA(Gln) + L-glutamine + ATP + H2O = L-glutaminyl-tRNA(Gln) + L-glutamate + ADP + phosphate + H(+). Functionally, allows the formation of correctly charged Gln-tRNA(Gln) through the transamidation of misacylated Glu-tRNA(Gln) in organisms which lack glutaminyl-tRNA synthetase. The reaction takes place in the presence of glutamine and ATP through an activated gamma-phospho-Glu-tRNA(Gln). The sequence is that of Glutamyl-tRNA(Gln) amidotransferase subunit A from Corynebacterium glutamicum (strain ATCC 13032 / DSM 20300 / JCM 1318 / BCRC 11384 / CCUG 27702 / LMG 3730 / NBRC 12168 / NCIMB 10025 / NRRL B-2784 / 534).